The primary structure comprises 114 residues: Large ribosomal subunit protein uL18 (114 aa).

This sequence belongs to the universal ribosomal protein uL18 family. Part of the 50S ribosomal subunit; part of the 5S rRNA/L5/L18/L25 subcomplex. Contacts the 23S rRNA. Contacts protein L27 and the 5S rRNA.

This is one of the proteins that bind and probably mediate the attachment of the 5S RNA into the large ribosomal subunit, where it forms part of the central protuberance. The protein is Large ribosomal subunit protein uL18 (rplR) of Deinococcus radiodurans (strain ATCC 13939 / DSM 20539 / JCM 16871 / CCUG 27074 / LMG 4051 / NBRC 15346 / NCIMB 9279 / VKM B-1422 / R1).